Reading from the N-terminus, the 428-residue chain is Cytochrome c biogenesis protein CcsB (428 aa).

3 consecutive transmembrane segments (helical) span residues 14–34 (LRFA…GTFI), 72–92 (SNWF…CSFR), and 162–182 (LGPI…AYGN).

The protein belongs to the Ccs1/CcsB family. In terms of assembly, may interact with CcsA.

The protein resides in the cellular thylakoid membrane. Required during biogenesis of c-type cytochromes (cytochrome c6 and cytochrome f) at the step of heme attachment. The sequence is that of Cytochrome c biogenesis protein CcsB from Prochlorococcus marinus subsp. pastoris (strain CCMP1986 / NIES-2087 / MED4).